We begin with the raw amino-acid sequence, 587 residues long: Arginine--tRNA ligase (587 aa).

The short motif at 123–133 is the 'HIGH' region element; that stretch reads ANVAKPLHVGH.

This sequence belongs to the class-I aminoacyl-tRNA synthetase family. Monomer.

It localises to the cytoplasm. The catalysed reaction is tRNA(Arg) + L-arginine + ATP = L-arginyl-tRNA(Arg) + AMP + diphosphate. This is Arginine--tRNA ligase from Alkaliphilus oremlandii (strain OhILAs) (Clostridium oremlandii (strain OhILAs)).